We begin with the raw amino-acid sequence, 212 residues long: Large ribosomal subunit protein bL25 (212 aa).

Residues 1–25 (MSQSTIHKIAVKKRTETGKNENNRL) are disordered. Residues 13–24 (KRTETGKNENNR) are compositionally biased toward basic and acidic residues.

This sequence belongs to the bacterial ribosomal protein bL25 family. CTC subfamily. In terms of assembly, part of the 50S ribosomal subunit; part of the 5S rRNA/L5/L18/L25 subcomplex. Contacts the 5S rRNA. Binds to the 5S rRNA independently of L5 and L18.

In terms of biological role, this is one of the proteins that binds to the 5S RNA in the ribosome where it forms part of the central protuberance. This Leptospira borgpetersenii serovar Hardjo-bovis (strain L550) protein is Large ribosomal subunit protein bL25.